Consider the following 411-residue polypeptide: LL-diaminopimelate aminotransferase (411 aa).

Y15 and G42 together coordinate substrate. Pyridoxal 5'-phosphate is bound by residues Y72, 108 to 109 (SK), Y132, N187, Y218, and 246 to 248 (SFS). Substrate-binding residues include K109, Y132, and N187. N6-(pyridoxal phosphate)lysine is present on K249. 2 residues coordinate pyridoxal 5'-phosphate: R257 and N292. The substrate site is built by N292 and R388.

Belongs to the class-I pyridoxal-phosphate-dependent aminotransferase family. LL-diaminopimelate aminotransferase subfamily. Homodimer. Requires pyridoxal 5'-phosphate as cofactor.

The catalysed reaction is (2S,6S)-2,6-diaminopimelate + 2-oxoglutarate = (S)-2,3,4,5-tetrahydrodipicolinate + L-glutamate + H2O + H(+). The protein operates within amino-acid biosynthesis; L-lysine biosynthesis via DAP pathway; LL-2,6-diaminopimelate from (S)-tetrahydrodipicolinate (aminotransferase route): step 1/1. Its function is as follows. Involved in the synthesis of meso-diaminopimelate (m-DAP or DL-DAP), required for both lysine and peptidoglycan biosynthesis. Catalyzes the direct conversion of tetrahydrodipicolinate to LL-diaminopimelate. The chain is LL-diaminopimelate aminotransferase from Synechococcus sp. (strain JA-3-3Ab) (Cyanobacteria bacterium Yellowstone A-Prime).